The following is a 394-amino-acid chain: Chalcone synthase 4 (394 aa).

C165 is a catalytic residue.

The protein belongs to the thiolase-like superfamily. Chalcone/stilbene synthases family.

The enzyme catalyses (E)-4-coumaroyl-CoA + 3 malonyl-CoA + 3 H(+) = 2',4,4',6'-tetrahydroxychalcone + 3 CO2 + 4 CoA. It participates in secondary metabolite biosynthesis; flavonoid biosynthesis. The primary product of this enzyme is 4,2',4',6'-tetrahydroxychalcone (also termed naringenin-chalcone or chalcone) which can under specific conditions spontaneously isomerize into naringenin. The sequence is that of Chalcone synthase 4 (CHS4) from Bromheadia finlaysoniana (Orchid).